Reading from the N-terminus, the 477-residue chain is V-type ATP synthase beta chain (477 aa).

This sequence belongs to the ATPase alpha/beta chains family.

Functionally, produces ATP from ADP in the presence of a proton gradient across the membrane. The V-type beta chain is a regulatory subunit. This chain is V-type ATP synthase beta chain, found in Anaeromyxobacter dehalogenans (strain 2CP-1 / ATCC BAA-258).